Here is a 334-residue protein sequence, read N- to C-terminus: Tryptophan--tRNA ligase (334 aa).

ATP contacts are provided by residues 11-13 (QPS) and 19-20 (GN). A 'HIGH' region motif is present at residues 12-20 (PSGELTIGN). L-tryptophan is bound at residue Asp135. Residues 147-149 (GED), Val186, and 195-199 (KMSKS) each bind ATP. A 'KMSKS' region motif is present at residues 195–199 (KMSKS).

This sequence belongs to the class-I aminoacyl-tRNA synthetase family. As to quaternary structure, homodimer.

It is found in the cytoplasm. It catalyses the reaction tRNA(Trp) + L-tryptophan + ATP = L-tryptophyl-tRNA(Trp) + AMP + diphosphate + H(+). In terms of biological role, catalyzes the attachment of tryptophan to tRNA(Trp). Amino acylates tRNA(Trp) with both L- and D-tryptophan, although D-tryptophan is a poor substrate. This is Tryptophan--tRNA ligase from Escherichia coli (strain K12).